A 315-amino-acid polypeptide reads, in one-letter code: Acetyl-coenzyme A carboxylase carboxyl transferase subunit alpha (315 aa).

Residues 40–293 enclose the CoA carboxyltransferase C-terminal domain; that stretch reads LQDKSKTLTE…REELSSQLAM (254 aa).

The protein belongs to the AccA family. As to quaternary structure, acetyl-CoA carboxylase is a heterohexamer composed of biotin carboxyl carrier protein (AccB), biotin carboxylase (AccC) and two subunits each of ACCase subunit alpha (AccA) and ACCase subunit beta (AccD).

Its subcellular location is the cytoplasm. It carries out the reaction N(6)-carboxybiotinyl-L-lysyl-[protein] + acetyl-CoA = N(6)-biotinyl-L-lysyl-[protein] + malonyl-CoA. The protein operates within lipid metabolism; malonyl-CoA biosynthesis; malonyl-CoA from acetyl-CoA: step 1/1. In terms of biological role, component of the acetyl coenzyme A carboxylase (ACC) complex. First, biotin carboxylase catalyzes the carboxylation of biotin on its carrier protein (BCCP) and then the CO(2) group is transferred by the carboxyltransferase to acetyl-CoA to form malonyl-CoA. In Pseudomonas savastanoi pv. phaseolicola (strain 1448A / Race 6) (Pseudomonas syringae pv. phaseolicola (strain 1448A / Race 6)), this protein is Acetyl-coenzyme A carboxylase carboxyl transferase subunit alpha.